Here is a 377-residue protein sequence, read N- to C-terminus: Succinyl-diaminopimelate desuccinylase (377 aa).

Histidine 68 contributes to the Zn(2+) binding site. Aspartate 70 is a catalytic residue. Aspartate 101 lines the Zn(2+) pocket. The active-site Proton acceptor is the glutamate 135. Residues glutamate 136, glutamate 164, and histidine 350 each coordinate Zn(2+).

Belongs to the peptidase M20A family. DapE subfamily. In terms of assembly, homodimer. The cofactor is Zn(2+). Co(2+) serves as cofactor.

The enzyme catalyses N-succinyl-(2S,6S)-2,6-diaminopimelate + H2O = (2S,6S)-2,6-diaminopimelate + succinate. Its pathway is amino-acid biosynthesis; L-lysine biosynthesis via DAP pathway; LL-2,6-diaminopimelate from (S)-tetrahydrodipicolinate (succinylase route): step 3/3. In terms of biological role, catalyzes the hydrolysis of N-succinyl-L,L-diaminopimelic acid (SDAP), forming succinate and LL-2,6-diaminopimelate (DAP), an intermediate involved in the bacterial biosynthesis of lysine and meso-diaminopimelic acid, an essential component of bacterial cell walls. This Acinetobacter baumannii (strain SDF) protein is Succinyl-diaminopimelate desuccinylase.